Reading from the N-terminus, the 565-residue chain is Periplasmic trehalase (565 aa).

The first 30 residues, 1-30 (MKSPAPSRPQKMALIPACIFLCFAALSVQA), serve as a signal peptide directing secretion. Substrate contacts are provided by residues arginine 152, 159 to 160 (WD), asparagine 196, 205 to 207 (RSQ), 277 to 279 (RPE), and glycine 310. Residues aspartate 312 and glutamate 496 each act as proton donor/acceptor in the active site. Position 511 (glutamate 511) interacts with substrate. The tract at residues 539-565 (CDNVPATRPLSESTTQPVKPKEAEPTL) is disordered.

The protein belongs to the glycosyl hydrolase 37 family. Monomer.

Its subcellular location is the periplasm. The enzyme catalyses alpha,alpha-trehalose + H2O = alpha-D-glucose + beta-D-glucose. Provides the cells with the ability to utilize trehalose at high osmolarity by splitting it into glucose molecules that can subsequently be taken up by the phosphotransferase-mediated uptake system. The sequence is that of Periplasmic trehalase from Shigella dysenteriae serotype 1 (strain Sd197).